The chain runs to 322 residues: Phthalate dioxygenase reductase (322 aa).

In terms of domain architecture, FAD-binding FR-type spans 7–109; the sequence is DGFLRLKIAS…SLPRNEFPLD (103 aa). FMN is bound by residues 56-57, 73-75, 81-84, Thr125, and Phe226; these read RT, AVK, and RGGS. The region spanning 239 to 322 is the 2Fe-2S ferredoxin-type domain; sequence FTVRLSRSGT…AKSAELVLDL (84 aa). Cys273 is a [2Fe-2S] cluster binding site. An FMN-binding site is contributed by Ser275. Cys278, Cys281, and Cys309 together coordinate [2Fe-2S] cluster.

This sequence belongs to the PDR/VanB family. As to quaternary structure, monomer. It depends on FMN as a cofactor.

Functionally, component of the electron transfer chain involved in pyridine nucleotide-dependent dihydroxylation of phthalate. Utilizes FMN to mediate electron transfer from the two-electron donor, NADH, to the one-electron acceptor, (2Fe-2S). In Burkholderia cepacia (Pseudomonas cepacia), this protein is Phthalate dioxygenase reductase (ophA1).